Here is a 178-residue protein sequence, read N- to C-terminus: ATP synthase subunit delta (178 aa).

The protein belongs to the ATPase delta chain family. In terms of assembly, F-type ATPases have 2 components, F(1) - the catalytic core - and F(0) - the membrane proton channel. F(1) has five subunits: alpha(3), beta(3), gamma(1), delta(1), epsilon(1). F(0) has three main subunits: a(1), b(2) and c(10-14). The alpha and beta chains form an alternating ring which encloses part of the gamma chain. F(1) is attached to F(0) by a central stalk formed by the gamma and epsilon chains, while a peripheral stalk is formed by the delta and b chains.

It is found in the cell inner membrane. Its function is as follows. F(1)F(0) ATP synthase produces ATP from ADP in the presence of a proton or sodium gradient. F-type ATPases consist of two structural domains, F(1) containing the extramembraneous catalytic core and F(0) containing the membrane proton channel, linked together by a central stalk and a peripheral stalk. During catalysis, ATP synthesis in the catalytic domain of F(1) is coupled via a rotary mechanism of the central stalk subunits to proton translocation. In terms of biological role, this protein is part of the stalk that links CF(0) to CF(1). It either transmits conformational changes from CF(0) to CF(1) or is implicated in proton conduction. This is ATP synthase subunit delta from Marinomonas sp. (strain MWYL1).